Here is a 368-residue protein sequence, read N- to C-terminus: Glycolate oxidase 2 (368 aa).

An FMN hydroxy acid dehydrogenase domain is found at 1–360 (MALVTNVCEY…TRGHVVTESD (360 aa)). Residues 78 to 80 (PTA), Ser107, 128 to 130 (QLS), and Thr156 contribute to the FMN site. Arg165 contributes to the glyoxylate binding site. FMN is bound by residues Lys231 and Ser253. Glyoxylate is bound by residues His255 and Arg258. His255 acts as the Proton acceptor in catalysis. Residues 286–290 (DSGFR) and 309–310 (GR) each bind FMN. The short motif at 366 to 368 (SRL) is the Microbody targeting signal element.

The protein belongs to the FMN-dependent alpha-hydroxy acid dehydrogenase family. In terms of assembly, homotetramer. FMN is required as a cofactor.

The protein localises to the peroxisome. The catalysed reaction is glycolate + O2 = glyoxylate + H2O2. The protein operates within photosynthesis; photorespiration; glycine from 2-phosphoglycolate: step 2/3. Catalyzes the oxidation of glycolate to glyoxylate, with a reduction of O2 to H2O2. Is a key enzyme in photorespiration in green plants. This Oryza sativa subsp. indica (Rice) protein is Glycolate oxidase 2 (GLO2).